The following is an 89-amino-acid chain: Small ribosomal subunit protein uS15 (89 aa).

The protein belongs to the universal ribosomal protein uS15 family. As to quaternary structure, part of the 30S ribosomal subunit. Forms a bridge to the 50S subunit in the 70S ribosome, contacting the 23S rRNA.

In terms of biological role, one of the primary rRNA binding proteins, it binds directly to 16S rRNA where it helps nucleate assembly of the platform of the 30S subunit by binding and bridging several RNA helices of the 16S rRNA. Its function is as follows. Forms an intersubunit bridge (bridge B4) with the 23S rRNA of the 50S subunit in the ribosome. This is Small ribosomal subunit protein uS15 from Pelotomaculum thermopropionicum (strain DSM 13744 / JCM 10971 / SI).